The chain runs to 426 residues: Glutamyl-tRNA reductase (426 aa).

Residues 51-54 (TCNR), Ser110, 115-117 (EAQ), and Gln121 each bind substrate. The active-site Nucleophile is Cys52. 190-195 (GAGEMA) is a binding site for NADP(+).

The protein belongs to the glutamyl-tRNA reductase family. In terms of assembly, homodimer.

The enzyme catalyses (S)-4-amino-5-oxopentanoate + tRNA(Glu) + NADP(+) = L-glutamyl-tRNA(Glu) + NADPH + H(+). The protein operates within porphyrin-containing compound metabolism; protoporphyrin-IX biosynthesis; 5-aminolevulinate from L-glutamyl-tRNA(Glu): step 1/2. In terms of biological role, catalyzes the NADPH-dependent reduction of glutamyl-tRNA(Glu) to glutamate 1-semialdehyde (GSA). The chain is Glutamyl-tRNA reductase from Desulfotalea psychrophila (strain LSv54 / DSM 12343).